The primary structure comprises 361 residues: DNA replication and repair protein RecF (361 aa).

30–37 (GANGSGKT) lines the ATP pocket.

It belongs to the RecF family.

The protein resides in the cytoplasm. Functionally, the RecF protein is involved in DNA metabolism; it is required for DNA replication and normal SOS inducibility. RecF binds preferentially to single-stranded, linear DNA. It also seems to bind ATP. This chain is DNA replication and repair protein RecF, found in Chromohalobacter salexigens (strain ATCC BAA-138 / DSM 3043 / CIP 106854 / NCIMB 13768 / 1H11).